A 309-amino-acid polypeptide reads, in one-letter code: Zinc finger CCCH domain-containing protein 31 (309 aa).

The tract at residues 1–36 is disordered; that stretch reads MEGAGAARKRSRPDTANGGAAGGKRSRETESFQTGL. 2 consecutive C3H1-type zinc fingers follow at residues 37 to 65 and 103 to 131; these read SSKLKPCTKFFSTIGCPFGEGCHFSHFVP and SGKTRMCTKYNTAEGCKFGDKCHFAHGER. The tract at residues 86-106 is disordered; sequence ARAPMDHAAGGNSHPASSGKT. The region spanning 175–239 is the KH domain; it reads SATAKISVDA…DQIKQASNMV (65 aa). The interval 249-273 is disordered; the sequence is STPAKKPAGSAAGAAPAGRGGPGGR. Residues 251–265 show a composition bias toward low complexity; that stretch reads PAKKPAGSAAGAAPA. The C3H1-type 3 zinc finger occupies 275-302; the sequence is NYKTKLCENFVKGTCTFGDRCHFAHGEN.

The chain is Zinc finger CCCH domain-containing protein 31 from Oryza sativa subsp. japonica (Rice).